The chain runs to 147 residues: MARPKKCRRIEFIPKNTYFMPIGKKRCKIEEIKLRLEELEAMRLKDIEGLNQEECAERMQVSRQTFQNIIDSARKKVALALTKGSAINISGGDYTTHHCKFKCLDCEEVYNINYEQDRQKCPSCGSQNVICIKKMGSCNKKCHKDND.

The protein belongs to the UPF0251 family.

The chain is UPF0251 protein NT01CX_1491 from Clostridium novyi (strain NT).